The following is a 69-amino-acid chain: UPF0248 protein AF_0420 (69 aa).

Belongs to the UPF0248 family.

The protein is UPF0248 protein AF_0420 of Archaeoglobus fulgidus (strain ATCC 49558 / DSM 4304 / JCM 9628 / NBRC 100126 / VC-16).